The following is a 236-amino-acid chain: Ribose-5-phosphate isomerase A (236 aa).

Substrate is bound by residues 29 to 32 (SGST), 86 to 89 (DGAD), and 99 to 102 (KGGG). Residue Glu108 is the Proton acceptor of the active site. Lys126 provides a ligand contact to substrate.

Belongs to the ribose 5-phosphate isomerase family. Homodimer.

It catalyses the reaction aldehydo-D-ribose 5-phosphate = D-ribulose 5-phosphate. Its pathway is carbohydrate degradation; pentose phosphate pathway; D-ribose 5-phosphate from D-ribulose 5-phosphate (non-oxidative stage): step 1/1. Functionally, catalyzes the reversible conversion of ribose-5-phosphate to ribulose 5-phosphate. This Prochlorococcus marinus (strain NATL1A) protein is Ribose-5-phosphate isomerase A.